Consider the following 881-residue polypeptide: Valine--tRNA ligase (881 aa).

The short motif at 49–59 (PNVTGKLHLGH) is the 'HIGH' region element. Residues 526-530 (KMSKS) carry the 'KMSKS' region motif. Lysine 529 is an ATP binding site. Residues 810–881 (LADLINLDEE…VRQRLADLEK (72 aa)) are a coiled coil.

This sequence belongs to the class-I aminoacyl-tRNA synthetase family. ValS type 1 subfamily. In terms of assembly, monomer.

It is found in the cytoplasm. It catalyses the reaction tRNA(Val) + L-valine + ATP = L-valyl-tRNA(Val) + AMP + diphosphate. Catalyzes the attachment of valine to tRNA(Val). As ValRS can inadvertently accommodate and process structurally similar amino acids such as threonine, to avoid such errors, it has a 'posttransfer' editing activity that hydrolyzes mischarged Thr-tRNA(Val) in a tRNA-dependent manner. This Bacillus anthracis protein is Valine--tRNA ligase.